We begin with the raw amino-acid sequence, 139 residues long: UPF0225 protein Bpro_4182 (139 aa).

This sequence belongs to the UPF0225 family.

The chain is UPF0225 protein Bpro_4182 from Polaromonas sp. (strain JS666 / ATCC BAA-500).